Here is an 85-residue protein sequence, read N- to C-terminus: U5-theraphotoxin-Hhn1a (85 aa).

The signal sequence occupies residues 1–21; sequence MKSQIFFAVAALFLLTVRTYA. A propeptide spanning residues 22–49 is cleaved from the precursor; the sequence is SKSKEQDLRDALFSAMFSADNQLNPQER. Intrachain disulfides connect C51/C65, C58/C70, and C64/C77.

This sequence belongs to the neurotoxin 10 (Hwtx-1) family. 18 (Hntx-VII) subfamily. As to expression, expressed by the venom gland.

It localises to the secreted. In terms of biological role, ion channel impairing toxin that inhibits voltage-gated sodium channels. The recombinantly expressed toxin shows a weak activity against Nav1.7/SCN9A, and shifts the voltage dependence of channel activation to more depolarized potentials. The protein is U5-theraphotoxin-Hhn1a of Cyriopagopus hainanus (Chinese bird spider).